Consider the following 448-residue polypeptide: T-box transcription factor T homolog 1 (448 aa).

The T-box DNA-binding region spans Leu-54–Asp-224. 2 disordered regions span residues Ala-290–Ser-312 and Thr-401–Leu-448. The segment covering Ser-417–Pro-442 has biased composition (polar residues).

The protein localises to the nucleus. Its function is as follows. Involved in the transcriptional regulation of genes required for mesoderm formation and differentiation. This chain is T-box transcription factor T homolog 1, found in Branchiostoma floridae (Florida lancelet).